Consider the following 229-residue polypeptide: Acetylcholine-binding protein (229 aa).

An N-terminal signal peptide occupies residues 1 to 19 (MRRNIFCLACLWIVQACLS). A glycan (N-linked (GlcNAc...) asparagine) is linked at Asn-85. The Ig-like domain maps to 114-217 (PEVLTPQLAR…PEAYEDVEVS (104 aa)). Cys-142 and Cys-155 are joined by a disulfide.

As to quaternary structure, homopentamer. N-glycosylated. In terms of tissue distribution, expressed by glial cells.

Its subcellular location is the synaptic cleft. Its function is as follows. Binds to acetylcholine. Modulates neuronal synaptic transmission. This Lymnaea stagnalis (Great pond snail) protein is Acetylcholine-binding protein.